The primary structure comprises 551 residues: Cytochrome bc1 complex cytochrome b subunit (551 aa).

A helical membrane pass occupies residues 44-64 (FLLGEIALYSFIVLLLTGVYL). The heme site is built by H113 and H127. Transmembrane regions (helical) follow at residues 117–137 (ALMFTAAIMVHLARIFFTGAF), 145–165 (WVIGSLLLILAMFEGYFGYSM), and 188–208 (VIGTWLHWALFGGDFPGTILI). The heme site is built by H215 and H230. The next 5 helical transmembrane spans lie at 216 to 236 (ILLIPGVILALIGLHLALVWF), 265 to 285 (SGAFFAAIVGVLGLMGGFLQI), 334 to 354 (PVWVAVIMALVFVLLITYPFL), 380 to 400 (IGAMAITFYMVLTLAAMNDII), and 417 to 437 (IGMVILPLLVYFITYRWCIGL). Residues 532-551 (ALREHQDSIASSPNGERGKH) are disordered.

The protein belongs to the cytochrome b family. The cytochrome bc1 complex is composed of a cytochrome b (QcrB), the Rieske iron-sulfur protein (QcrA) and a diheme cytochrome c (QcrC) subunit. It depends on heme as a cofactor.

It localises to the cell membrane. The catalysed reaction is a quinol + 2 Fe(III)-[cytochrome c](out) = a quinone + 2 Fe(II)-[cytochrome c](out) + 2 H(+)(out). In terms of biological role, cytochrome b subunit of the cytochrome bc1 complex, an essential component of the respiratory electron transport chain required for ATP synthesis. The bc1 complex catalyzes the oxidation of ubiquinol and the reduction of cytochrome c in the respiratory chain. The bc1 complex operates through a Q-cycle mechanism that couples electron transfer to generation of the proton gradient that drives ATP synthesis. The cytochrome b subunit contains two ubiquinol reactive sites: the oxidation (QP) site and the reduction (QN) site. This is Cytochrome bc1 complex cytochrome b subunit (qcrB) from Mycobacterium leprae (strain TN).